Reading from the N-terminus, the 150-residue chain is UPF0098 protein CT_736 (150 aa).

Belongs to the UPF0098 family.

The protein is UPF0098 protein CT_736 of Chlamydia trachomatis serovar D (strain ATCC VR-885 / DSM 19411 / UW-3/Cx).